A 153-amino-acid polypeptide reads, in one-letter code: Large ribosomal subunit protein uL15 (153 aa).

The tract at residues 21 to 41 (RGIGSGKGKTGGRGIKGQKSR) is disordered. Gly residues predominate over residues 23-35 (IGSGKGKTGGRGI).

This sequence belongs to the universal ribosomal protein uL15 family. In terms of assembly, part of the 50S ribosomal subunit.

Binds to the 23S rRNA. This Rickettsia africae (strain ESF-5) protein is Large ribosomal subunit protein uL15.